The chain runs to 404 residues: Argininosuccinate synthase (404 aa).

ATP-binding positions include 12-20 (AYSGGLDTS) and Ala-39. L-citrulline contacts are provided by Tyr-90 and Ser-95. Gly-120 provides a ligand contact to ATP. Residues Thr-122, Asn-126, and Asp-127 each contribute to the L-aspartate site. Position 126 (Asn-126) interacts with L-citrulline. 5 residues coordinate L-citrulline: Arg-130, Ser-181, Ser-190, Glu-266, and Tyr-278.

The protein belongs to the argininosuccinate synthase family. Type 1 subfamily. In terms of assembly, homotetramer.

The protein resides in the cytoplasm. The catalysed reaction is L-citrulline + L-aspartate + ATP = 2-(N(omega)-L-arginino)succinate + AMP + diphosphate + H(+). It functions in the pathway amino-acid biosynthesis; L-arginine biosynthesis; L-arginine from L-ornithine and carbamoyl phosphate: step 2/3. In Rhodospirillum rubrum (strain ATCC 11170 / ATH 1.1.1 / DSM 467 / LMG 4362 / NCIMB 8255 / S1), this protein is Argininosuccinate synthase.